The primary structure comprises 120 residues: MAYAKLGRDSAARKALLRDLATDLIINERIETTEAKAKELRSVVEKMITLGKRGDLHARRQAAAFIRREVADEETGQDAIQKLFSDIAPRYEDRQGGYTRVLKVGPRRGDGAPMAIIELV.

This sequence belongs to the bacterial ribosomal protein bL17 family. In terms of assembly, part of the 50S ribosomal subunit. Contacts protein L32.

This chain is Large ribosomal subunit protein bL17, found in Halalkalibacterium halodurans (strain ATCC BAA-125 / DSM 18197 / FERM 7344 / JCM 9153 / C-125) (Bacillus halodurans).